The primary structure comprises 273 residues: Large ribosomal subunit protein uL2c (273 aa).

Positions 223-273 (MNPVDHPHGGGEGRAPIGRKKPTTPWGYPALGRRSRKRNKYSDSFILRRRK) are disordered.

This sequence belongs to the universal ribosomal protein uL2 family. In terms of assembly, part of the 50S ribosomal subunit.

The protein localises to the plastid. Its subcellular location is the chloroplast. This chain is Large ribosomal subunit protein uL2c (rpl2), found in Calycanthus floridus var. glaucus (Eastern sweetshrub).